A 516-amino-acid polypeptide reads, in one-letter code: MSFSVDELARIAIDLQSDIGHTDRFSRLITTLRQILGCDASALLRYEAHQFVPLAIDGLAQDVLGRRFALEGHPRLEAIARAGDVVRFPADSDLPDPYDGLIPGHESLKVHACVGLPLFAGQTLIGALTLDGMDADRFDSFSDEELRLIAALVAGALNNALLIARLEAQNVLPVQPVNDAQPERQEIIGLSAPMLQLKKEIDIVAASDLNVLISGETGTGKELVAKAVHQGSPRAANPLVYLNCAALPESVAESELFGHVKGAFTGAISNRSGKFEMADNGTLFLDEIGELSLALQAKLLRVLQYGDIQRVGDDRSLRVDVRVLAATNRDLRQEVVEGRFRADLYHRLSVFPLSVPALRERENDVVLLAGYFCEQCRLRMGLARVILAEAARNRLQQWSWPGNVRELEHAIHRAVVLARATQAGDEVVLEPQHFQFAVAAPMLPTETAAAAPAIEKVNLREATDSFQREAISRALEANQRNWAATARALELDVANLHRLAKRLGLKGSPPGKNSAG.

D57 is modified (4-aspartylphosphate). The 230-residue stretch at 187-416 (IIGLSAPMLQ…LEHAIHRAVV (230 aa)) folds into the Sigma-54 factor interaction domain. ATP is bound by residues 215-222 (GETGTGKE) and 278-287 (ADNGTLFLDE). The segment at residues 482-501 (WAATARALELDVANLHRLAK) is a DNA-binding region (H-T-H motif).

It functions in the pathway nitrogen metabolism; nitric oxide reduction. Functionally, required for the expression of anaerobic nitric oxide (NO) reductase, acts as a transcriptional activator for at least the norVW operon. Activation also requires sigma-54. The sequence is that of Anaerobic nitric oxide reductase transcription regulator NorR from Klebsiella pneumoniae (strain 342).